Consider the following 131-residue polypeptide: Hypocretin neuropeptide precursor (131 aa).

The signal sequence occupies residues 1 to 33; it reads MNPPFAKVSWATVTLLLLLLLLPPAVLSPGAAA. Q34 is modified (pyrrolidone carboxylic acid). 2 cysteine pairs are disulfide-bonded: C39–C45 and C40–C47. L66 carries the post-translational modification Leucine amide. Residue M97 is modified to Methionine amide. Positions 98–131 are cleaved as a propeptide — removed in mature form; sequence GRRAGAEPAPRLCPGRRCLAAAASSVAPGGRSGI.

This sequence belongs to the orexin family. Specific enzymatic cleavages at paired basic residues yield the different active peptides.

It is found in the rough endoplasmic reticulum. Its subcellular location is the cytoplasmic vesicle. It localises to the synapse. In terms of biological role, neuropeptides that play a significant role in the regulation of food intake and sleep-wakefulness, possibly by coordinating the complex behavioral and physiologic responses of these complementary homeostatic functions. A broader role in the homeostatic regulation of energy metabolism, autonomic function, hormonal balance and the regulation of body fluids, is also suggested. Functionally, binds to orexin receptors HCRTR1/OX1R and HCRTR2/OX2R with a high affinity. Stimulates food intake. Modulates pituitary luteinizing hormone secretion in an ovarian steroid-dependent manner. Its function is as follows. Binds to orexin receptor HCRTR2/OX2R only. Stimulates food intake. Modulates pituitary luteinizing hormone secretion in an ovarian steroid-dependent manner. This Sus scrofa (Pig) protein is Hypocretin neuropeptide precursor (HCRT).